The chain runs to 550 residues: Warthog protein 8 (550 aa).

The N-terminal stretch at methionine 1–glycine 19 is a signal peptide.

It belongs to the hedgehog family. The C-terminal domain displays an autoproteolysis activity.

It is found in the secreted. The protein localises to the cell surface. The protein resides in the cell membrane. Its subcellular location is the extracellular space. Intercellular signal essential for a variety of patterning events during development. This is Warthog protein 8 (wrt-8) from Caenorhabditis elegans.